The chain runs to 382 residues: DNA replication and repair protein RecF (382 aa).

30–37 (GPNGHGKS) is a binding site for ATP.

Belongs to the RecF family.

The protein resides in the cytoplasm. Its function is as follows. The RecF protein is involved in DNA metabolism; it is required for DNA replication and normal SOS inducibility. RecF binds preferentially to single-stranded, linear DNA. It also seems to bind ATP. The sequence is that of DNA replication and repair protein RecF from Magnetococcus marinus (strain ATCC BAA-1437 / JCM 17883 / MC-1).